The primary structure comprises 399 residues: MSNTLVLVLNCGSSSLKFAILDATNGDEKISGLAECFGLENARIKWKLRGEKHEASLGAFSAHREAVEYIVNKILVNEPELKGQLIAIGHRIVHGGEKFTHSVIIDDAVLKGIEDCASLAPLHNPAHLIGIRAAQASFPSLPQVAVFDTAFHQSMPDRAYIYALPYKLYREHGIRRYGMHGTSHLFVSREAAKALGKDVNDTNVICAHLGNGASVTAVKGGKSVDTSMGLTPLEGLVMGTRCGDLDPSIIYHLVHQLGYTLDEVNNLMNKQSGLLGISELTNDCRGIEEGYAEGHKGATLALEIFCYRLAKYIASYTVPLGRLDAIVFTGGIGENSDLIREKVLNLLEIFKFEVDSERNKAARFGNQGVITKEGSPIAMVIPTNEEWVIAEDSLRLVNK.

Mg(2+) is bound at residue asparagine 10. Lysine 17 contacts ATP. Arginine 91 contributes to the substrate binding site. Aspartate 148 functions as the Proton donor/acceptor in the catalytic mechanism. ATP contacts are provided by residues 208-212 (HLGNG), 283-285 (DCR), and 331-335 (GIGEN). Glutamate 385 is a binding site for Mg(2+).

This sequence belongs to the acetokinase family. Homodimer. It depends on Mg(2+) as a cofactor. The cofactor is Mn(2+).

It is found in the cytoplasm. It carries out the reaction acetate + ATP = acetyl phosphate + ADP. It functions in the pathway metabolic intermediate biosynthesis; acetyl-CoA biosynthesis; acetyl-CoA from acetate: step 1/2. In terms of biological role, catalyzes the formation of acetyl phosphate from acetate and ATP. Can also catalyze the reverse reaction. The sequence is that of Acetate kinase from Shewanella amazonensis (strain ATCC BAA-1098 / SB2B).